The sequence spans 385 residues: 1-deoxy-D-xylulose 5-phosphate reductoisomerase (385 aa).

NADPH is bound by residues Thr10, Gly11, Ser12, Ile13, Gly36, Asn38, and Asn122. Residue Lys123 participates in 1-deoxy-D-xylulose 5-phosphate binding. An NADPH-binding site is contributed by Glu124. Asp148 is a binding site for Mn(2+). 1-deoxy-D-xylulose 5-phosphate is bound by residues Ser149, Glu150, Ser174, and His197. Mn(2+) is bound at residue Glu150. Gly203 lines the NADPH pocket. Residues Ser210, Asn215, Lys216, and Glu219 each contribute to the 1-deoxy-D-xylulose 5-phosphate site. Glu219 provides a ligand contact to Mn(2+).

This sequence belongs to the DXR family. Mg(2+) serves as cofactor. Mn(2+) is required as a cofactor.

The catalysed reaction is 2-C-methyl-D-erythritol 4-phosphate + NADP(+) = 1-deoxy-D-xylulose 5-phosphate + NADPH + H(+). It functions in the pathway isoprenoid biosynthesis; isopentenyl diphosphate biosynthesis via DXP pathway; isopentenyl diphosphate from 1-deoxy-D-xylulose 5-phosphate: step 1/6. Catalyzes the NADPH-dependent rearrangement and reduction of 1-deoxy-D-xylulose-5-phosphate (DXP) to 2-C-methyl-D-erythritol 4-phosphate (MEP). This is 1-deoxy-D-xylulose 5-phosphate reductoisomerase from Citrifermentans bemidjiense (strain ATCC BAA-1014 / DSM 16622 / JCM 12645 / Bem) (Geobacter bemidjiensis).